Reading from the N-terminus, the 434-residue chain is Adenylosuccinate synthetase (434 aa).

GTP is bound by residues 15–21 and 43–45; these read GDEGKGK and GHT. D16 acts as the Proton acceptor in catalysis. Mg(2+) is bound by residues D16 and G43. IMP is bound by residues 16 to 19, 41 to 44, T133, R147, Q228, T243, and R307; these read DEGK and NAGH. The active-site Proton donor is the H44. 303-309 contacts substrate; the sequence is SVTGRAR. GTP is bound by residues R309, 335 to 337, and 418 to 420; these read KLD and STG.

Belongs to the adenylosuccinate synthetase family. In terms of assembly, homodimer. It depends on Mg(2+) as a cofactor.

Its subcellular location is the cytoplasm. It carries out the reaction IMP + L-aspartate + GTP = N(6)-(1,2-dicarboxyethyl)-AMP + GDP + phosphate + 2 H(+). It participates in purine metabolism; AMP biosynthesis via de novo pathway; AMP from IMP: step 1/2. Plays an important role in the de novo pathway of purine nucleotide biosynthesis. Catalyzes the first committed step in the biosynthesis of AMP from IMP. In Neisseria meningitidis serogroup C / serotype 2a (strain ATCC 700532 / DSM 15464 / FAM18), this protein is Adenylosuccinate synthetase.